The sequence spans 37 residues: Large ribosomal subunit protein bL36 (37 aa).

This sequence belongs to the bacterial ribosomal protein bL36 family.

The polypeptide is Large ribosomal subunit protein bL36 (Cyanothece sp. (strain PCC 7425 / ATCC 29141)).